A 156-amino-acid polypeptide reads, in one-letter code: Small ribosomal subunit protein uS7 (156 aa).

In terms of assembly, part of the 30S ribosomal subunit. Contacts proteins S9 and S11. Binds to the C-terminus of IF3 and to the C-terminus of Era.

One of the primary rRNA binding proteins, it binds directly to 3'-end of the 16S rRNA where it nucleates assembly of the head domain of the 30S subunit. Is located at the subunit interface close to the decoding center. Binds mRNA and the E site tRNA blocking its exit path in the ribosome. This blockage implies that this section of the ribosome must be able to move to release the deacetylated tRNA. The chain is Small ribosomal subunit protein uS7 (rpsG) from Thermus thermophilus (strain ATCC 27634 / DSM 579 / HB8).